The following is a 471-amino-acid chain: 3-isopropylmalate dehydratase large subunit (471 aa).

Cys347, Cys407, and Cys410 together coordinate [4Fe-4S] cluster.

Belongs to the aconitase/IPM isomerase family. LeuC type 1 subfamily. As to quaternary structure, heterodimer of LeuC and LeuD. Requires [4Fe-4S] cluster as cofactor.

It carries out the reaction (2R,3S)-3-isopropylmalate = (2S)-2-isopropylmalate. The protein operates within amino-acid biosynthesis; L-leucine biosynthesis; L-leucine from 3-methyl-2-oxobutanoate: step 2/4. In terms of biological role, catalyzes the isomerization between 2-isopropylmalate and 3-isopropylmalate, via the formation of 2-isopropylmaleate. The chain is 3-isopropylmalate dehydratase large subunit from Anoxybacillus flavithermus (strain DSM 21510 / WK1).